A 670-amino-acid polypeptide reads, in one-letter code: DNA ligase (670 aa).

Residues 34-38 (DAEYD), 83-84 (SL), and glutamate 117 contribute to the NAD(+) site. Residue lysine 119 is the N6-AMP-lysine intermediate of the active site. NAD(+)-binding residues include arginine 140, glutamate 177, lysine 293, and lysine 317. The Zn(2+) site is built by cysteine 411, cysteine 414, cysteine 429, and cysteine 434. Residues 591-670 (KVGGRFTGKT…DEFLAMLEEG (80 aa)) enclose the BRCT domain.

The protein belongs to the NAD-dependent DNA ligase family. LigA subfamily. Mg(2+) serves as cofactor. Requires Mn(2+) as cofactor.

It carries out the reaction NAD(+) + (deoxyribonucleotide)n-3'-hydroxyl + 5'-phospho-(deoxyribonucleotide)m = (deoxyribonucleotide)n+m + AMP + beta-nicotinamide D-nucleotide.. DNA ligase that catalyzes the formation of phosphodiester linkages between 5'-phosphoryl and 3'-hydroxyl groups in double-stranded DNA using NAD as a coenzyme and as the energy source for the reaction. It is essential for DNA replication and repair of damaged DNA. This chain is DNA ligase, found in Geobacter sulfurreducens (strain ATCC 51573 / DSM 12127 / PCA).